The chain runs to 158 residues: Deoxyuridine 5'-triphosphate nucleotidohydrolase (158 aa).

Residues Arg66–Gly68, Asn79, Thr83–Asp85, and Lys93 each bind substrate. Residues Arg139 to Ala158 are disordered.

This sequence belongs to the dUTPase family. It depends on Mg(2+) as a cofactor.

The enzyme catalyses dUTP + H2O = dUMP + diphosphate + H(+). It participates in pyrimidine metabolism; dUMP biosynthesis; dUMP from dCTP (dUTP route): step 2/2. This enzyme is involved in nucleotide metabolism: it produces dUMP, the immediate precursor of thymidine nucleotides and it decreases the intracellular concentration of dUTP so that uracil cannot be incorporated into DNA. The chain is Deoxyuridine 5'-triphosphate nucleotidohydrolase from Helicobacter hepaticus (strain ATCC 51449 / 3B1).